A 194-amino-acid chain; its full sequence is Cysteine and glycine-rich protein 3 (194 aa).

The tract at residues Met1–Gly5 is interaction with TCAP. The LIM zinc-binding 1 domain occupies Cys10–Cys61. Positions Arg64–Lys69 match the Nuclear localization signal motif. The segment at Gln94 to Ser105 is interaction with CLF2 and isoform 2. A phosphoserine mark is found at Ser95 and Ser153. In terms of domain architecture, LIM zinc-binding 2 spans Cys120 to Cys171.

In terms of assembly, self-associates. Oligomeric in the cytoplasm and monomeric in the nucleus. Homooligomers preferentially form along the actin cytoskeleton. Isoform 2 interacts with isoform 1. Isoform 1 but not isoform 2 interacts with MYOD1 and MYOG. Isoform 1 interacts with TCAP, ACTN2 and NRAP. Isoform 2 interacts with TCAP and alpha-actinin. Interacts with LDHD. Interacts (via N-terminus)with GLRX3 (via C-terminus) and PPP3CA; GLRX3 and calcineurin compete for interaction with CSRP3. Interacts with MYF6. Interacts with CFL2; the stoichiometry influences F-actin depolymerization and possibly two molecules of CFL2 can interact with one molecule of CSRP3 resulting in the highest functional impact; the interaction is stronger with phosphorylated CFL2. In terms of processing, phosphorylated by PKC/PRKCA. In terms of tissue distribution, cardiac and slow-twitch skeletal muscles. Isoform 2 is expressed in striated muscle. Isoform 2 is specifically expressed at higher levels in patients with neuromuscular diseases, such as limb-girdle muscular dystrophy 2A (LGMD2A), Duchenne muscular dystrophy (DMD) and dermatomyositis.

It localises to the nucleus. It is found in the cytoplasm. Its subcellular location is the cytoskeleton. The protein localises to the myofibril. The protein resides in the sarcomere. It localises to the z line. Functionally, positive regulator of myogenesis. Acts as a cofactor for myogenic bHLH transcription factors such as MYOD1, and probably MYOG and MYF6. Enhances the DNA-binding activity of the MYOD1:TCF3 isoform E47 complex and may promote formation of a functional MYOD1:TCF3 isoform E47:MEF2A complex involved in myogenesis. Plays a crucial and specific role in the organization of cytosolic structures in cardiomyocytes. Could play a role in mechanical stretch sensing. May be a scaffold protein that promotes the assembly of interacting proteins at Z-line structures. It is essential for calcineurin anchorage to the Z line. Required for stress-induced calcineurin-NFAT activation. The role in regulation of cytoskeleton dynamics by association with CFL2 is reported conflictingly: Shown to enhance CFL2-mediated F-actin depolymerization dependent on the CSRP3:CFL2 molecular ratio, and also shown to reduce the ability of CLF1 and CFL2 to enhance actin depolymerization. Proposed to contribute to the maintenance of muscle cell integrity through an actin-based mechanism. Can directly bind to actin filaments, cross-link actin filaments into bundles without polarity selectivity and protect them from dilution- and cofilin-mediated depolymerization; the function seems to involve its self-association. In vitro can inhibit PKC/PRKCA activity. Proposed to be involved in cardiac stress signaling by down-regulating excessive PKC/PRKCA signaling. May play a role in early sarcomere organization. Overexpression in myotubes negatively regulates myotube differentiation. By association with isoform 1 and thus changing the CSRP3 isoform 1:CFL2 stoichiometry is proposed to down-regulate CFL2-mediated F-actin depolymerization. The protein is Cysteine and glycine-rich protein 3 (CSRP3) of Homo sapiens (Human).